The chain runs to 145 residues: D-aminoacyl-tRNA deacylase (145 aa).

The Gly-cisPro motif, important for rejection of L-amino acids motif lies at 137–138; it reads GP.

This sequence belongs to the DTD family. In terms of assembly, homodimer.

It localises to the cytoplasm. The catalysed reaction is glycyl-tRNA(Ala) + H2O = tRNA(Ala) + glycine + H(+). It catalyses the reaction a D-aminoacyl-tRNA + H2O = a tRNA + a D-alpha-amino acid + H(+). Functionally, an aminoacyl-tRNA editing enzyme that deacylates mischarged D-aminoacyl-tRNAs. Also deacylates mischarged glycyl-tRNA(Ala), protecting cells against glycine mischarging by AlaRS. Acts via tRNA-based rather than protein-based catalysis; rejects L-amino acids rather than detecting D-amino acids in the active site. By recycling D-aminoacyl-tRNA to D-amino acids and free tRNA molecules, this enzyme counteracts the toxicity associated with the formation of D-aminoacyl-tRNA entities in vivo and helps enforce protein L-homochirality. This is D-aminoacyl-tRNA deacylase from Klebsiella pneumoniae subsp. pneumoniae (strain ATCC 700721 / MGH 78578).